The chain runs to 360 residues: Phospho-N-acetylmuramoyl-pentapeptide-transferase (360 aa).

Helical transmembrane passes span 26–46, 70–90, 97–117, 132–152, 168–188, 199–219, 236–256, 263–283, 288–308, and 338–358; these read TILG…AVIQ, GTPT…TLLW, YVWV…VDDY, AKFF…FSTA, VVLP…VGSS, GLAI…AYAT, AGEV…FLWF, VFMG…LAVV, LVLL…MLQV, and VIVR…AMLK.

Belongs to the glycosyltransferase 4 family. MraY subfamily. Mg(2+) serves as cofactor.

It is found in the cell inner membrane. The catalysed reaction is UDP-N-acetyl-alpha-D-muramoyl-L-alanyl-gamma-D-glutamyl-meso-2,6-diaminopimeloyl-D-alanyl-D-alanine + di-trans,octa-cis-undecaprenyl phosphate = di-trans,octa-cis-undecaprenyl diphospho-N-acetyl-alpha-D-muramoyl-L-alanyl-D-glutamyl-meso-2,6-diaminopimeloyl-D-alanyl-D-alanine + UMP. The protein operates within cell wall biogenesis; peptidoglycan biosynthesis. Functionally, catalyzes the initial step of the lipid cycle reactions in the biosynthesis of the cell wall peptidoglycan: transfers peptidoglycan precursor phospho-MurNAc-pentapeptide from UDP-MurNAc-pentapeptide onto the lipid carrier undecaprenyl phosphate, yielding undecaprenyl-pyrophosphoryl-MurNAc-pentapeptide, known as lipid I. This is Phospho-N-acetylmuramoyl-pentapeptide-transferase from Alkalilimnicola ehrlichii (strain ATCC BAA-1101 / DSM 17681 / MLHE-1).